Reading from the N-terminus, the 60-residue chain is Large ribosomal subunit protein bL32 (60 aa).

Residues 1–60 are disordered; that stretch reads MAVQQNKKTPSKRGMHRSHDFLVAPQLSVEPTTGETHMRHHISPNGFYRGRKVLKTKNDE. Residues 49-60 show a composition bias toward basic residues; it reads RGRKVLKTKNDE.

The protein belongs to the bacterial ribosomal protein bL32 family.

This chain is Large ribosomal subunit protein bL32, found in Janthinobacterium sp. (strain Marseille) (Minibacterium massiliensis).